A 378-amino-acid polypeptide reads, in one-letter code: Pulmonary surfactant-associated protein D (378 aa).

The N-terminal stretch at 1–20 (MLLLPLSVLILLTQPPRSLG) is a signal peptide. Cys-35 and Cys-40 each carry S-nitrosocysteine. A disordered region spans residues 43 to 221 (MENGLPGRDG…ERGAKGESGL (179 aa)). Residues 46–222 (GLPGRDGRDG…RGAKGESGLP (177 aa)) enclose the Collagen-like domain. Over residues 50–65 (RDGRDGREGPRGEKGD) the composition is skewed to basic and acidic residues. Pro-78 is subject to 4-hydroxyproline. Lys-87 is subject to 5-hydroxylysine. Asn-90 carries N-linked (GlcNAc...) asparagine glycosylation. Pro-96 is modified (4-hydroxyproline). Lys-99 is subject to 5-hydroxylysine. The segment covering 105–114 (CGPPGPPGIP) has biased composition (pro residues). Positions 137–146 (PKGETGPKGE) are enriched in low complexity. 4-hydroxyproline is present on residues Pro-171 and Pro-177. Low complexity predominate over residues 173–197 (ERGAPGSAGAAGPAGATGPQGPSGA). The segment covering 204–216 (KGDRGPPGERGAK) has biased composition (basic and acidic residues). Residues 223–254 (GITALRQQVETLQGQVQRLQKAFSQYKKVELF) adopt a coiled-coil conformation. A C-type lectin domain is found at 260–378 (VGEKIFKTGG…GELRLVICEF (119 aa)). 2 disulfides stabilise this stretch: Cys-281-Cys-376 and Cys-354-Cys-368. Residue Asn-323 is glycosylated (N-linked (GlcNAc...) asparagine).

It belongs to the SFTPD family. As to quaternary structure, oligomeric complex of 4 set of homotrimers. Hydroxylation on proline residues within the sequence motif, GXPG, is most likely to be 4-hydroxy as this fits the requirement for 4-hydroxylation in vertebrates. In terms of processing, S-nitrosylation at Cys-35 and Cys-40 alters the quaternary structure which results in a pro-inflammatory chemoattractive signaling activity with macrophages.

It is found in the secreted. The protein localises to the extracellular space. The protein resides in the extracellular matrix. Its subcellular location is the surface film. Contributes to the lung's defense against inhaled microorganisms, organic antigens and toxins. Interacts with compounds such as bacterial lipopolysaccharides, oligosaccharides and fatty acids and modulates leukocyte action in immune response. May participate in the extracellular reorganization or turnover of pulmonary surfactant. Binds strongly maltose residues and to a lesser extent other alpha-glucosyl moieties. The protein is Pulmonary surfactant-associated protein D (SFTPD) of Sus scrofa (Pig).